A 91-amino-acid polypeptide reads, in one-letter code: Small ribosomal subunit protein bS16 (91 aa).

Belongs to the bacterial ribosomal protein bS16 family.

This chain is Small ribosomal subunit protein bS16, found in Streptococcus mutans serotype c (strain ATCC 700610 / UA159).